Reading from the N-terminus, the 112-residue chain is Small ribosomal subunit protein bS6 (112 aa).

This sequence belongs to the bacterial ribosomal protein bS6 family.

Binds together with bS18 to 16S ribosomal RNA. The polypeptide is Small ribosomal subunit protein bS6 (Hyphomonas neptunium (strain ATCC 15444)).